Consider the following 393-residue polypeptide: S-adenosylmethionine synthase (393 aa).

Histidine 17 serves as a coordination point for ATP. Residue aspartate 19 participates in Mg(2+) binding. Glutamate 45 contacts K(+). L-methionine contacts are provided by glutamate 58 and glutamine 104. Residues 104 to 114 (QSAEIAQGVEE) are flexible loop. Residues 171 to 173 (DAK), aspartate 245, 251 to 252 (RK), alanine 268, and lysine 272 each bind ATP. Aspartate 245 is a binding site for L-methionine. L-methionine is bound at residue lysine 276.

The protein belongs to the AdoMet synthase family. In terms of assembly, homotetramer; dimer of dimers. Mg(2+) serves as cofactor. It depends on K(+) as a cofactor.

It localises to the cytoplasm. The catalysed reaction is L-methionine + ATP + H2O = S-adenosyl-L-methionine + phosphate + diphosphate. It participates in amino-acid biosynthesis; S-adenosyl-L-methionine biosynthesis; S-adenosyl-L-methionine from L-methionine: step 1/1. Catalyzes the formation of S-adenosylmethionine (AdoMet) from methionine and ATP. The overall synthetic reaction is composed of two sequential steps, AdoMet formation and the subsequent tripolyphosphate hydrolysis which occurs prior to release of AdoMet from the enzyme. This Hyphomonas neptunium (strain ATCC 15444) protein is S-adenosylmethionine synthase.